The following is a 365-amino-acid chain: LIM and cysteine-rich domains protein 1 (365 aa).

S16 is subject to Phosphoserine. The region spanning 99–206 is the PET domain; the sequence is MIMTNPIATG…GEVALPGQGG (108 aa). A disordered region spans residues 200–235; it reads ALPGQGGLPKEEGKQQEKPEGAETTAATTNGSLSDP. Over residues 208-220 the composition is skewed to basic and acidic residues; sequence PKEEGKQQEKPEG. LIM zinc-binding domains follow at residues 241–306 and 307–365; these read YVCE…SLRP and RCSG…SKRS.

In terms of assembly, interacts with GATA1 and GATA4. Interacts with beta-dystroglycan. Interacts with GATA6. Expressed in the heart (at protein level). Expressed in many tissues with highest abundance in skeletal muscle.

It localises to the cytoplasm. The protein localises to the nucleus. Its function is as follows. Transcriptional cofactor that restricts GATA6 function by inhibiting DNA-binding, resulting in repression of GATA6 transcriptional activation of downstream target genes. Represses GATA6-mediated trans activation of lung- and cardiac tissue-specific promoters. Inhibits DNA-binding by GATA4 and GATA1 to the cTNC promoter. Plays a critical role in the development of cardiac hypertrophy via activation of calcineurin/nuclear factor of activated T-cells signaling pathway. This Homo sapiens (Human) protein is LIM and cysteine-rich domains protein 1 (LMCD1).